The chain runs to 187 residues: Elongation factor P (187 aa).

It belongs to the elongation factor P family.

The protein resides in the cytoplasm. It functions in the pathway protein biosynthesis; polypeptide chain elongation. Involved in peptide bond synthesis. Stimulates efficient translation and peptide-bond synthesis on native or reconstituted 70S ribosomes in vitro. Probably functions indirectly by altering the affinity of the ribosome for aminoacyl-tRNA, thus increasing their reactivity as acceptors for peptidyl transferase. The chain is Elongation factor P from Helicobacter hepaticus (strain ATCC 51449 / 3B1).